A 393-amino-acid chain; its full sequence is MEENNLQCSSVVDGNFEEVPRETAIQFKPPLYRQRYQFVKNLVDQHEPKKVADLGCGDTSLLRLLKVNPCIELLVGVDINEDKLRWRGDSLAPFMGDFLKPRDLNLTIILYHGSVVERDSRLLGFDLITCIELIEHLDSGDLARFPEVVFGYLSPSMIVISTPNSEFNPLFPSVTLRDSDHKFEWTRMEFQTWALYVANRYDYSVEFTGVGEPPAGAENVGYCTQIGIFQKNGGRATEACVSEQHDQHVYKAVFTTSYPSLQQERFFKLVLVNEVSQQVESLRVSHLPRRKEQDGEQGDKPKDIGGSKAPVPCFGPVFTEVEKAKIENSPKPFCVGDKFFVPLQRLLAYPRLNRLCANEEMMRSVIADSIPLSSDGSAVVTDLCNYFDEQFEF.

S60, D78, and S114 together coordinate S-adenosyl-L-methionine. Mg(2+) contacts are provided by E132, E135, H136, and H181. Residues 283–309 (RVSHLPRRKEQDGEQGDKPKDIGGSKA) are disordered. The span at 290–305 (RKEQDGEQGDKPKDIG) shows a compositional bias: basic and acidic residues.

It belongs to the methyltransferase superfamily. HEN1 family. Mg(2+) is required as a cofactor.

It localises to the cytoplasm. The catalysed reaction is small RNA 3'-end nucleotide + S-adenosyl-L-methionine = small RNA 3'-end 2'-O-methylnucleotide + S-adenosyl-L-homocysteine + H(+). Functionally, methyltransferase that adds a 2'-O-methyl group at the 3'-end of piRNAs, a class of 24 to 30 nucleotide RNAs that are generated by a Dicer-independent mechanism and are primarily derived from transposons and other repeated sequence elements. This probably protects the 3'-end of piRNAs from uridylation activity and subsequent degradation. Stabilization of piRNAs is essential for gametogenesis. The polypeptide is Small RNA 2'-O-methyltransferase (HENMT1) (Macaca fascicularis (Crab-eating macaque)).